Consider the following 318-residue polypeptide: NADH-ubiquinone oxidoreductase chain 1 (318 aa).

The next 8 helical transmembrane spans lie at 2–22, 70–90, 100–120, 136–156, 172–192, 222–242, 253–273, and 294–314; these read FMIN…FLTL, MFII…SPLP, LGVL…LWSG, VAQT…VLLM, LWLL…TLAE, LFFL…AILF, ELYT…FLWI, and LPLT…TASI.

Belongs to the complex I subunit 1 family. In terms of assembly, core subunit of respiratory chain NADH dehydrogenase (Complex I) which is composed of 45 different subunits.

It localises to the mitochondrion inner membrane. It catalyses the reaction a ubiquinone + NADH + 5 H(+)(in) = a ubiquinol + NAD(+) + 4 H(+)(out). Functionally, core subunit of the mitochondrial membrane respiratory chain NADH dehydrogenase (Complex I) which catalyzes electron transfer from NADH through the respiratory chain, using ubiquinone as an electron acceptor. Essential for the catalytic activity and assembly of complex I. This is NADH-ubiquinone oxidoreductase chain 1 (MT-ND1) from Balaenoptera physalus (Fin whale).